We begin with the raw amino-acid sequence, 208 residues long: Large ribosomal subunit protein uL3 (208 aa).

Gln-149 carries the N5-methylglutamine modification.

Belongs to the universal ribosomal protein uL3 family. As to quaternary structure, part of the 50S ribosomal subunit. Forms a cluster with proteins L14 and L19. Methylated by PrmB.

Its function is as follows. One of the primary rRNA binding proteins, it binds directly near the 3'-end of the 23S rRNA, where it nucleates assembly of the 50S subunit. The chain is Large ribosomal subunit protein uL3 from Actinobacillus succinogenes (strain ATCC 55618 / DSM 22257 / CCUG 43843 / 130Z).